The following is a 329-amino-acid chain: Glycerol-3-phosphate dehydrogenase [NAD(P)+] (329 aa).

Residues tyrosine 14, arginine 34, and lysine 108 each coordinate NADPH. 3 residues coordinate sn-glycerol 3-phosphate: lysine 108, glycine 137, and serine 139. Alanine 141 provides a ligand contact to NADPH. Lysine 192, aspartate 245, serine 255, arginine 256, and asparagine 257 together coordinate sn-glycerol 3-phosphate. Lysine 192 serves as the catalytic Proton acceptor. Arginine 256 is a binding site for NADPH. Residues isoleucine 280 and glutamate 282 each contribute to the NADPH site.

The protein belongs to the NAD-dependent glycerol-3-phosphate dehydrogenase family.

The protein resides in the cytoplasm. The enzyme catalyses sn-glycerol 3-phosphate + NAD(+) = dihydroxyacetone phosphate + NADH + H(+). The catalysed reaction is sn-glycerol 3-phosphate + NADP(+) = dihydroxyacetone phosphate + NADPH + H(+). It participates in membrane lipid metabolism; glycerophospholipid metabolism. Catalyzes the reduction of the glycolytic intermediate dihydroxyacetone phosphate (DHAP) to sn-glycerol 3-phosphate (G3P), the key precursor for phospholipid synthesis. The polypeptide is Glycerol-3-phosphate dehydrogenase [NAD(P)+] (Wigglesworthia glossinidia brevipalpis).